A 501-amino-acid polypeptide reads, in one-letter code: Dipeptide and tripeptide permease A (501 aa).

Over 1–21 (MSTANNKPAESVSLNAFKQPR) the chain is Cytoplasmic. A helical membrane pass occupies residues 22 to 44 (AFYLIFSIELWERFGYYGLQGIM). Over 45–59 (AVYLVKQLGMSEADS) the chain is Periplasmic. A helical transmembrane segment spans residues 60–80 (ITLFSSFSALVYGLVAIGGWL). Residues 81 to 89 (GDKVLGTKR) are Cytoplasmic-facing. The chain crosses the membrane as a helical span at residues 90–110 (VIMLGAIVLAIGYALVAWSGH). Position 111 (D111) is a topological domain, periplasmic. A helical membrane pass occupies residues 112 to 132 (AAIVYMGMATIAVGNGLFKAN). Over 133 to 153 (PSSLLSTCYDKNDPRLDGAFT) the chain is Cytoplasmic. The chain crosses the membrane as a helical span at residues 154-174 (MYYMSINIGSFFSMLATPWLA). The Periplasmic portion of the chain corresponds to 175–178 (ARFG). Residues 179–199 (WSVAFALSVVGMVITIINFAF) form a helical membrane-spanning segment. Topologically, residues 200 to 218 (CQKWVKQYGSKPDFAPVHM) are cytoplasmic. Residues 219-239 (GKLLATIAGVVVLVAIATWLL) form a helical membrane-spanning segment. Residues 240–246 (HNQGIAR) lie on the Periplasmic side of the membrane. The chain crosses the membrane as a helical span at residues 247-267 (MVLGVVALGIVVIFAKETIGL). At 268-274 (KGAARRK) the chain is on the cytoplasmic side. Residues 275–295 (MIVAFLLMVEAIVFFVLYSQM) form a helical membrane-spanning segment. Residues 296-320 (PTSLNFFAIRNVEHSILGIAFEPEQ) are Periplasmic-facing. The helical transmembrane segment at 321–341 (YQALNPFWIMIGSPILAAIYN) threads the bilayer. The Cytoplasmic segment spans residues 342 to 352 (KMGDRLPMPHK). Residues 353-373 (FAIGMVLCSGAFLVLPLGAKF) form a helical membrane-spanning segment. The Periplasmic portion of the chain corresponds to 374-383 (ASDAGIVSVN). Residues 384-404 (WLILSYALQSIGELMISGLGL) form a helical membrane-spanning segment. The Cytoplasmic portion of the chain corresponds to 405–414 (AMVAQLVPQR). The helical transmembrane segment at 415–435 (LMGFIMGSWFLTTAGAAIIAG) threads the bilayer. At 436 to 459 (KIANLMAVPENVTDPLVSLEVYGH) the chain is on the periplasmic side. The chain crosses the membrane as a helical span at residues 460 to 480 (VFLQIGIVTAVIAALMLLTAP). Residues 481–501 (KLNRMTQDDSADLKARETAAA) lie on the Cytoplasmic side of the membrane.

The protein belongs to the major facilitator superfamily. Proton-dependent oligopeptide transporter (POT/PTR) (TC 2.A.17) family. DtpA subfamily.

The protein localises to the cell inner membrane. In terms of biological role, proton-dependent permease that transports di- and tripeptides. This is Dipeptide and tripeptide permease A from Klebsiella pneumoniae (strain 342).